Reading from the N-terminus, the 224-residue chain is Serum amyloid P-component (224 aa).

Positions 1 to 20 (MDKLLLWMFVFTSLLSEAFC) are cleaved as a signal peptide. Residues 25–224 (KRKVFVFPRE…YVVIRPRVWD (200 aa)) form the Pentraxin (PTX) domain. Residue Asn-52 is glycosylated (N-linked (GlcNAc...) asparagine). Cys-56 and Cys-115 are disulfide-bonded. Asp-78, Asn-79, Glu-156, Gln-157, Asp-158, and Gln-168 together coordinate Ca(2+).

Belongs to the pentraxin family. In terms of assembly, homopentamer. Pentraxin (or pentaxin) have a discoid arrangement of 5 non-covalently bound subunits. It depends on Ca(2+) as a cofactor.

The protein localises to the secreted. This is Serum amyloid P-component (Apcs) from Mus musculus (Mouse).